Here is a 219-residue protein sequence, read N- to C-terminus: Guanylate kinase (219 aa).

The Guanylate kinase-like domain occupies 15–194 (GLMLVISSPS…AFSSVRAIVE (180 aa)). Position 22 to 29 (22 to 29 (SPSGAGKS)) interacts with ATP.

This sequence belongs to the guanylate kinase family.

It is found in the cytoplasm. The enzyme catalyses GMP + ATP = GDP + ADP. In terms of biological role, essential for recycling GMP and indirectly, cGMP. This Rhizobium meliloti (strain 1021) (Ensifer meliloti) protein is Guanylate kinase.